Reading from the N-terminus, the 338-residue chain is L-serine dehydratase (338 aa).

At lysine 39 the chain carries N6-(pyridoxal phosphate)lysine.

Belongs to the serine/threonine dehydratase family. Requires pyridoxal 5'-phosphate as cofactor.

It is found in the cytoplasm. The enzyme catalyses L-serine = pyruvate + NH4(+). The protein operates within carbohydrate biosynthesis; gluconeogenesis. The chain is L-serine dehydratase (SDL1) from Saccharomyces cerevisiae (Baker's yeast).